Here is a 2224-residue protein sequence, read N- to C-terminus: Protein sidekick (2224 aa).

Positions Met-1–Ser-47 are cleaved as a signal peptide. Topologically, residues Cys-48 to Thr-2001 are extracellular. An Ig-like C2-type 1 domain is found at Pro-72–Val-155. A disulfide bond links Cys-95 and Cys-138. N-linked (GlcNAc...) asparagine glycans are attached at residues Asn-164, Asn-250, Asn-318, and Asn-327. 4 Ig-like C2-type domains span residues Pro-261 to Gln-355, Pro-359 to Ser-445, Pro-455 to Ser-541, and Thr-546 to Ser-636. Cystine bridges form between Cys-283/Cys-336 and Cys-382/Cys-433. N-linked (GlcNAc...) asparagine glycosylation is found at Asn-463, Asn-485, and Asn-491. 2 cysteine pairs are disulfide-bonded: Cys-476–Cys-525 and Cys-567–Cys-620. 16 N-linked (GlcNAc...) asparagine glycosylation sites follow: Asn-628, Asn-661, Asn-707, Asn-809, Asn-870, Asn-942, Asn-1019, Asn-1094, Asn-1109, Asn-1172, Asn-1203, Asn-1282, Asn-1329, Asn-1379, Asn-1414, and Asn-1420. 13 consecutive Fibronectin type-III domains span residues Pro-643–Glu-753, Pro-758–Gly-855, Pro-860–Asp-967, Glu-971–Val-1065, Ala-1069–Ala-1164, Pro-1169–Ala-1270, Gly-1275–Asp-1372, Val-1376–Arg-1469, Ala-1474–Ala-1570, Gly-1575–Ala-1677, Glu-1682–Gly-1785, Ala-1789–Asp-1883, and Ser-1885–Lys-1984. 2 N-linked (GlcNAc...) asparagine glycosylation sites follow: Asn-1843 and Asn-1876. A helical transmembrane segment spans residues Trp-2002–Leu-2022. Residues Cys-2023–Val-2224 lie on the Cytoplasmic side of the membrane. Disordered regions lie at residues Thr-2068–Pro-2157 and Leu-2171–Ser-2195. Position 2071 is a phosphoserine (Ser-2071). The span at Gly-2073–Arg-2085 shows a compositional bias: low complexity. Position 2074 is a phosphothreonine (Thr-2074). Composition is skewed to basic and acidic residues over residues His-2112 to Asp-2122 and Gln-2144 to Pro-2157. Ser-2113 and Ser-2117 each carry phosphoserine.

Belongs to the sidekick family.

It is found in the membrane. Functionally, participates in homotypic or heterotypic interactions in the eye during pattern formation to prevent extra cells from joining the precluster and differentiating as photoreceptor cells. This chain is Protein sidekick, found in Drosophila melanogaster (Fruit fly).